Here is a 156-residue protein sequence, read N- to C-terminus: Probable cyclic pyranopterin monophosphate synthase (156 aa).

Residues 74 to 76 (MCH) and 110 to 111 (ME) each bind substrate. The active site involves aspartate 125.

It belongs to the MoaC family. Homohexamer; trimer of dimers.

It carries out the reaction (8S)-3',8-cyclo-7,8-dihydroguanosine 5'-triphosphate = cyclic pyranopterin phosphate + diphosphate. Its pathway is cofactor biosynthesis; molybdopterin biosynthesis. Its function is as follows. Catalyzes the conversion of (8S)-3',8-cyclo-7,8-dihydroguanosine 5'-triphosphate to cyclic pyranopterin monophosphate (cPMP). This chain is Probable cyclic pyranopterin monophosphate synthase, found in Methanospirillum hungatei JF-1 (strain ATCC 27890 / DSM 864 / NBRC 100397 / JF-1).